The primary structure comprises 230 residues: Ribosome maturation factor RimM (230 aa).

Residues 149–230 (ADEFYWVDLI…RVVVDWEADY (82 aa)) enclose the PRC barrel domain.

It belongs to the RimM family. As to quaternary structure, binds ribosomal protein uS19.

The protein localises to the cytoplasm. In terms of biological role, an accessory protein needed during the final step in the assembly of 30S ribosomal subunit, possibly for assembly of the head region. Essential for efficient processing of 16S rRNA. May be needed both before and after RbfA during the maturation of 16S rRNA. It has affinity for free ribosomal 30S subunits but not for 70S ribosomes. This chain is Ribosome maturation factor RimM, found in Burkholderia mallei (strain NCTC 10229).